We begin with the raw amino-acid sequence, 289 residues long: Acetyl-coenzyme A carboxylase carboxyl transferase subunit beta (289 aa).

The CoA carboxyltransferase N-terminal domain maps to 36-289; the sequence is MWLRCPHCHQ…LLKTGSVANE (254 aa). Cysteine 40, cysteine 43, cysteine 58, and cysteine 61 together coordinate Zn(2+). The segment at 40–61 adopts a C4-type zinc-finger fold; that stretch reads CPHCHQLLFAKQLTQYAVCPNC.

This sequence belongs to the AccD/PCCB family. In terms of assembly, acetyl-CoA carboxylase is a heterohexamer composed of biotin carboxyl carrier protein (AccB), biotin carboxylase (AccC) and two subunits each of ACCase subunit alpha (AccA) and ACCase subunit beta (AccD). Zn(2+) is required as a cofactor.

The protein resides in the cytoplasm. The enzyme catalyses N(6)-carboxybiotinyl-L-lysyl-[protein] + acetyl-CoA = N(6)-biotinyl-L-lysyl-[protein] + malonyl-CoA. It functions in the pathway lipid metabolism; malonyl-CoA biosynthesis; malonyl-CoA from acetyl-CoA: step 1/1. Functionally, component of the acetyl coenzyme A carboxylase (ACC) complex. Biotin carboxylase (BC) catalyzes the carboxylation of biotin on its carrier protein (BCCP) and then the CO(2) group is transferred by the transcarboxylase to acetyl-CoA to form malonyl-CoA. This is Acetyl-coenzyme A carboxylase carboxyl transferase subunit beta from Limosilactobacillus reuteri subsp. reuteri (strain JCM 1112) (Lactobacillus reuteri).